Here is a 56-residue protein sequence, read N- to C-terminus: Small ribosomal subunit protein uS14 (56 aa).

It belongs to the universal ribosomal protein uS14 family.

In Kluyveromyces lactis (strain ATCC 8585 / CBS 2359 / DSM 70799 / NBRC 1267 / NRRL Y-1140 / WM37) (Yeast), this protein is Small ribosomal subunit protein uS14 (RPS29).